The chain runs to 203 residues: Glycerol-3-phosphate acyltransferase (203 aa).

Transmembrane regions (helical) follow at residues 3–23 (ILLA…VVVS), 51–71 (KAAI…VWLV), 74–94 (FGIG…LGHL), 116–136 (AVHP…AFFF), 140–160 (SLAA…LFGT), and 164–178 (PVAW…LLIW).

The protein belongs to the PlsY family. In terms of assembly, probably interacts with PlsX.

Its subcellular location is the cell inner membrane. The catalysed reaction is an acyl phosphate + sn-glycerol 3-phosphate = a 1-acyl-sn-glycero-3-phosphate + phosphate. It participates in lipid metabolism; phospholipid metabolism. Catalyzes the transfer of an acyl group from acyl-phosphate (acyl-PO(4)) to glycerol-3-phosphate (G3P) to form lysophosphatidic acid (LPA). This enzyme utilizes acyl-phosphate as fatty acyl donor, but not acyl-CoA or acyl-ACP. The protein is Glycerol-3-phosphate acyltransferase of Burkholderia pseudomallei (strain 1710b).